The chain runs to 928 residues: TBC1 domain family member 2A (928 aa).

N-acetylmethionine is present on Met1. The segment covering 1 to 19 (MEGAGENAPESSSSAPGSE) has biased composition (low complexity). The segment at 1–39 (MEGAGENAPESSSSAPGSEESARDPQVPPPEEESGDCAR) is disordered. The interaction with CADH1 stretch occupies residues 1–169 (MEGAGENAPE…AGNGPVLHLE (169 aa)). A PH domain is found at 45-142 (PKKLCGYLSK…WLQQLQMKRW (98 aa)). The disordered stretch occupies residues 225 to 275 (NKQAQGTGHEPPGEDSPQSGEPQREEQPLASDASTPGREPEDSPKPAPKPS). The tract at residues 295–433 (SEGITRNRTA…KVTQDFTHPP (139 aa)) is interaction with RAC1. Residues 298 to 416 (ITRNRTAQEK…LMDKNHAKQQ (119 aa)) adopt a coiled-coil conformation. The residue at position 436 (Ser436) is a Phosphoserine. One can recognise a Rab-GAP TBC domain in the interval 625 to 817 (GVPREHRPRV…RVWDAFLYEG (193 aa)). A coiled-coil region spans residues 875 to 913 (MKQLRQLRMVHRERLEAELRELEQLKAEYLERRASRRRA). Phosphoserine is present on residues Ser915 and Ser920.

As to quaternary structure, interacts with activated RAC1 and CDH1. Expressed in a broad range of tissues, especially in kidney, liver, lung and placenta. Also expressed in keratinocytes and epithelia-containing organs. Isoform 2 is differentially expressed in prostate normal and cancer cells (at protein level).

Its subcellular location is the cytoplasm. The protein resides in the cytoplasmic vesicle. The protein localises to the cell junction. Its function is as follows. Acts as a GTPase-activating protein for RAB7A. Signal effector acting as a linker between RAC1 and RAB7A, leading to RAB7A inactivation and subsequent inhibition of cadherin degradation and reduced cell-cell adhesion. This is TBC1 domain family member 2A (TBC1D2) from Homo sapiens (Human).